The following is a 266-amino-acid chain: Protein YABBY 5 (266 aa).

Residues 1-22 (MMSSAPETFSLDHLSQHQQQQP) form a disordered region. The C4-type zinc-finger motif lies at 36–63 (CNFCDTILAVGVPCSSLFKTVTVRCGHC). The span at 119 to 141 (ASPNVSSITSSNSSCANNAPATS) shows a compositional bias: low complexity. The segment at 119–174 (ASPNVSSITSSNSSCANNAPATSMASAANKATQREPQQPKNAPSANRTSEKRQRVP) is disordered. The segment covering 142–165 (MASAANKATQREPQQPKNAPSANR) has biased composition (polar residues).

The protein belongs to the YABBY family.

It localises to the nucleus. Functionally, may be involved in leaf cell growth and differentiation, rather than abaxial cell fate determination. The polypeptide is Protein YABBY 5 (YAB5) (Oryza sativa subsp. indica (Rice)).